The primary structure comprises 381 residues: uncharacterized protein (381 aa).

The tract at residues 176–292 is disordered; it reads HAAGKIKKSK…EPMVDETPQN (117 aa). Positions 177–186 are enriched in basic residues; it reads AAGKIKKSKN. Over residues 187 to 212 the composition is skewed to basic and acidic residues; the sequence is QKKDGTLSRPLGKKENKSVVKVKIEE. The span at 276-286 shows a compositional bias: acidic residues; it reads DEEDEDEEPMV.

This is an uncharacterized protein from Caenorhabditis elegans.